We begin with the raw amino-acid sequence, 190 residues long: uncharacterized protein (190 aa).

This is an uncharacterized protein from Acidianus hospitalis (AFV-1).